The primary structure comprises 470 residues: Uronate isomerase (470 aa).

This sequence belongs to the metallo-dependent hydrolases superfamily. Uronate isomerase family.

The catalysed reaction is D-glucuronate = D-fructuronate. It carries out the reaction aldehydo-D-galacturonate = keto-D-tagaturonate. Its pathway is carbohydrate metabolism; pentose and glucuronate interconversion. This is Uronate isomerase from Salmonella agona (strain SL483).